The following is a 305-amino-acid chain: Protoheme IX farnesyltransferase (305 aa).

Transmembrane regions (helical) follow at residues 28 to 48 (VVLLMLLTAIVGMCLASPGIV), 52 to 72 (VFLFGNLGIALAASSAAAINH), 102 to 122 (IFAAILCILSMIILIAFVNLL), 123 to 143 (TALLTFITLIGYAGFYTLYLK), 150 to 170 (IVIGGLAGAAPPLLGWVAVTG), 176 to 196 (ALILLLIIFLWTPPHFWALAI), 221 to 241 (INILLYTLLLTAISFLPFVIM), 243 to 263 (SGWIYFSSVCLLNLGFLYWAI), and 282 to 302 (IWYLMLLFTALLVDHYVYLAL).

Belongs to the UbiA prenyltransferase family. Protoheme IX farnesyltransferase subfamily.

It is found in the cell inner membrane. The enzyme catalyses heme b + (2E,6E)-farnesyl diphosphate + H2O = Fe(II)-heme o + diphosphate. The protein operates within porphyrin-containing compound metabolism; heme O biosynthesis; heme O from protoheme: step 1/1. In terms of biological role, converts heme B (protoheme IX) to heme O by substitution of the vinyl group on carbon 2 of heme B porphyrin ring with a hydroxyethyl farnesyl side group. The protein is Protoheme IX farnesyltransferase of Coxiella burnetii (strain CbuK_Q154) (Coxiella burnetii (strain Q154)).